The following is a 152-amino-acid chain: uncharacterized protein (152 aa).

Basic residues predominate over residues 1–13 (MHFSKLSRRKKGK). 2 disordered regions span residues 1–28 (MHFS…PPHR) and 75–152 (NRLG…AADE). Pro residues-rich tracts occupy residues 15–26 (PLPPLPTAPLPP) and 80–92 (PPAP…PQPP). The span at 133 to 152 (DGGDAEPGDEDLDALFAADE) shows a compositional bias: acidic residues.

This is an uncharacterized protein from Pan troglodytes (Chimpanzee).